The chain runs to 580 residues: Peptidyl-prolyl cis-trans isomerase-like 2 (580 aa).

A U-box domain is found at 42-115 (KRLPFRFCSL…GEYIDPVTYK (74 aa)). 5 disordered regions span residues 182–201 (IKEG…EDPS), 227–259 (QERA…SYQS), 439–459 (SPTL…RPTP), 479–530 (QKKQ…SSTT), and 553–580 (FVDE…SSWD). Positions 309-468 (QKGYARISTT…PDIRIVDVTI (160 aa)) constitute a PPIase cyclophilin-type domain. Over residues 439–457 (SPTLNKLETHPVNPTTNRP) the composition is skewed to polar residues. Residues 490–507 (EANRTAENDEEGSRRAED) show a composition bias toward basic and acidic residues.

The protein belongs to the cyclophilin-type PPIase family. PPIL2 subfamily.

The protein localises to the nucleus. It carries out the reaction [protein]-peptidylproline (omega=180) = [protein]-peptidylproline (omega=0). It catalyses the reaction S-ubiquitinyl-[E2 ubiquitin-conjugating enzyme]-L-cysteine + [acceptor protein]-L-lysine = [E2 ubiquitin-conjugating enzyme]-L-cysteine + N(6)-ubiquitinyl-[acceptor protein]-L-lysine.. It functions in the pathway protein modification; protein ubiquitination. Its function is as follows. May catalyze the cis-trans isomerization of proline imidic peptide bonds in oligopeptides thereby assisting the folding of proteins. May also function as a chaperone, playing a role in intracellular transport of proteins. May also have a protein ubiquitin ligase activity acting as an E3 ubiquitin protein ligase or as a ubiquitin-ubiquitin ligase promoting elongation of ubiquitin chains on proteins. The polypeptide is Peptidyl-prolyl cis-trans isomerase-like 2 (cyp8) (Emericella nidulans (strain FGSC A4 / ATCC 38163 / CBS 112.46 / NRRL 194 / M139) (Aspergillus nidulans)).